A 389-amino-acid polypeptide reads, in one-letter code: Probable dual-specificity RNA methyltransferase RlmN (389 aa).

Residue E114 is the Proton acceptor of the active site. A Radical SAM core domain is found at 120–358 (QHYGLSVCVT…CVVRQEHGTD (239 aa)). A disulfide bridge connects residues C127 and C363. Residues C134, C138, and C141 each contribute to the [4Fe-4S] cluster site. S-adenosyl-L-methionine is bound by residues 186–187 (GE), S218, 241–243 (SLH), and N319. Catalysis depends on C363, which acts as the S-methylcysteine intermediate. Positions 370–389 (TMKRDRQKAVAEASGKSEGK) are disordered. Residues 371 to 389 (MKRDRQKAVAEASGKSEGK) are compositionally biased toward basic and acidic residues.

The protein belongs to the radical SAM superfamily. RlmN family. [4Fe-4S] cluster serves as cofactor.

The protein localises to the cytoplasm. The catalysed reaction is adenosine(2503) in 23S rRNA + 2 reduced [2Fe-2S]-[ferredoxin] + 2 S-adenosyl-L-methionine = 2-methyladenosine(2503) in 23S rRNA + 5'-deoxyadenosine + L-methionine + 2 oxidized [2Fe-2S]-[ferredoxin] + S-adenosyl-L-homocysteine. It catalyses the reaction adenosine(37) in tRNA + 2 reduced [2Fe-2S]-[ferredoxin] + 2 S-adenosyl-L-methionine = 2-methyladenosine(37) in tRNA + 5'-deoxyadenosine + L-methionine + 2 oxidized [2Fe-2S]-[ferredoxin] + S-adenosyl-L-homocysteine. Specifically methylates position 2 of adenine 2503 in 23S rRNA and position 2 of adenine 37 in tRNAs. This Streptococcus thermophilus (strain CNRZ 1066) protein is Probable dual-specificity RNA methyltransferase RlmN.